Reading from the N-terminus, the 486-residue chain is Corytuberine synthase (486 aa).

Residues 6-21 traverse the membrane as a helical segment; that stretch reads ALFSLIPVILVFILLL. Cys-428 lines the heme pocket.

Belongs to the cytochrome P450 family. It depends on heme as a cofactor.

The protein localises to the endoplasmic reticulum membrane. The enzyme catalyses (S)-reticuline + reduced [NADPH--hemoprotein reductase] + O2 = (S)-corytuberine + oxidized [NADPH--hemoprotein reductase] + 2 H2O + 2 H(+). Its activity is regulated as follows. Inhibited by ketoconazole. Functionally, cytochrome P450 that catalyzes an intramolecular C-C phenol coupling of (S)-reticuline in magnoflorine biosynthesis. Catalyzes the formation of (S)-corytuberine from (S)-reticuline, and also, with a lover efficiency, the 4'-O-demethylation of codamine to produce orientaline, and subsequent C-C-phenol coupling of orientaline. Can also use (R,S)-norreticuline, (R,S)-orientaline, (S)-N-methylcoclaurine and (S)-coclaurine as substrates, but not (R,S)-6-O-methyllaudanosoline, (R,S)-6-O-methylnorlaudanosoline, (R,S)-laudanine, (R,S)-norlaudanine, (R,S)-4'-O-methyllaudanosoline, (R,S)-pseudocodamine, (R,S)-norpseudocodamine, (R,S)-laudanosine, (R,S)-norlaudanosine, (R,S)-laudanosoline or (R,S)-norlaudanosoline. This chain is Corytuberine synthase, found in Coptis japonica (Japanese goldthread).